Here is a 309-residue protein sequence, read N- to C-terminus: Protein MAK16 homolog (309 aa).

Residues 194-309 (EADQFSEEEA…IEEETENQAN (116 aa)) form a disordered region. Acidic residues-rich tracts occupy residues 195 to 227 (ADQFSEEEADENEEEGEEEMEEEFEDDIDDIED) and 235 to 270 (VEGDDDEDDIDDEYENEPYQDDDEEDDDDDDDDDEE). Positions 275–293 (ITKKRGPTFKPTKKTPQKR) are enriched in basic residues. Acidic residues predominate over residues 299–309 (EIEEETENQAN).

Belongs to the MAK16 family.

The protein localises to the nucleus. The protein resides in the nucleolus. The protein is Protein MAK16 homolog (mak16l) of Dictyostelium discoideum (Social amoeba).